The sequence spans 131 residues: Glycine cleavage system H protein (131 aa).

In terms of domain architecture, Lipoyl-binding spans 24 to 106; the sequence is TLRVGITDYA…YGEGWLVDLQ (83 aa). N6-lipoyllysine is present on Lys-65.

This sequence belongs to the GcvH family. The glycine cleavage system is composed of four proteins: P, T, L and H. The cofactor is (R)-lipoate.

The glycine cleavage system catalyzes the degradation of glycine. The H protein shuttles the methylamine group of glycine from the P protein to the T protein. This is Glycine cleavage system H protein from Mycobacterium sp. (strain JLS).